A 59-amino-acid polypeptide reads, in one-letter code: Large ribosomal subunit protein uL30 (59 aa).

It belongs to the universal ribosomal protein uL30 family. As to quaternary structure, part of the 50S ribosomal subunit.

This is Large ribosomal subunit protein uL30 from Leptospira biflexa serovar Patoc (strain Patoc 1 / ATCC 23582 / Paris).